We begin with the raw amino-acid sequence, 299 residues long: Ectoine dioxygenase (299 aa).

Positions 1–40 (MTTTTTNVTDLYPTRGATEVATPRQDPVVWGSPDAPGPVS) are disordered. Gln-133 serves as a coordination point for L-ectoine. Residue Lys-139 participates in 2-oxoglutarate binding. His-150, Asp-152, and His-251 together coordinate Fe cation.

The protein belongs to the PhyH family. EctD subfamily. In terms of assembly, homodimer. Requires Fe(2+) as cofactor.

It carries out the reaction L-ectoine + 2-oxoglutarate + O2 = 5-hydroxyectoine + succinate + CO2. In terms of biological role, involved in the biosynthesis of 5-hydroxyectoine, called compatible solute, which helps organisms to survive extreme osmotic stress by acting as a highly soluble organic osmolyte. Catalyzes the 2-oxoglutarate-dependent selective hydroxylation of L-ectoine to yield (4S,5S)-5-hydroxyectoine. The sequence is that of Ectoine dioxygenase from Streptomyces coelicolor (strain ATCC BAA-471 / A3(2) / M145).